The following is a 180-amino-acid chain: NAD(P)H-quinone oxidoreductase subunit 6, chloroplastic (180 aa).

Helical transmembrane passes span 10–30 (LLLAPLTLSLIFGGIGVVLLT), 32–52 (IIYSALSLGLVLICISFFYII), 57–77 (FVAVAQILIYIGAVNILILFA), 102–122 (IVCTSLFCSLITIILNISWFG), and 153–173 (FLPFELISIILLVALIGAITI).

This sequence belongs to the complex I subunit 6 family. As to quaternary structure, NDH is composed of at least 16 different subunits, 5 of which are encoded in the nucleus.

The protein localises to the plastid. The protein resides in the chloroplast thylakoid membrane. The enzyme catalyses a plastoquinone + NADH + (n+1) H(+)(in) = a plastoquinol + NAD(+) + n H(+)(out). It catalyses the reaction a plastoquinone + NADPH + (n+1) H(+)(in) = a plastoquinol + NADP(+) + n H(+)(out). Its function is as follows. NDH shuttles electrons from NAD(P)H:plastoquinone, via FMN and iron-sulfur (Fe-S) centers, to quinones in the photosynthetic chain and possibly in a chloroplast respiratory chain. The immediate electron acceptor for the enzyme in this species is believed to be plastoquinone. Couples the redox reaction to proton translocation, and thus conserves the redox energy in a proton gradient. The chain is NAD(P)H-quinone oxidoreductase subunit 6, chloroplastic (ndhG) from Cryptomeria japonica (Japanese cedar).